A 388-amino-acid chain; its full sequence is L-cysteine desulfidase (388 aa).

Catalysis depends on C25, which acts as the Proton acceptor. C282, C322, and C329 together coordinate [4Fe-4S] cluster.

This sequence belongs to the L-cysteine desulfidase family. Homotrimer. It depends on [4Fe-4S] cluster as a cofactor.

It catalyses the reaction L-cysteine + H2O = hydrogen sulfide + pyruvate + NH4(+) + H(+). In terms of biological role, catalyzes the cleavage of L-cysteine to form 2-aminoprop-2-enoate and sulfide. The former then spontaneously hydrolyzes to pyruvate and NH(3). May be responsible for the production of sulfide required for the biosynthesis of iron-sulfur centers in this archaea. Is very specific for L-cysteine, with no activity being detected with D-cysteine, L-homocysteine, 3-mercaptopropionate (cysteine without the amino group), cysteamine (cysteine without the carboxylate), or mercaptolactate (the hydroxyl analog of cysteine). This chain is L-cysteine desulfidase, found in Methanocaldococcus jannaschii (strain ATCC 43067 / DSM 2661 / JAL-1 / JCM 10045 / NBRC 100440) (Methanococcus jannaschii).